The following is a 122-amino-acid chain: Large ribosomal subunit protein uL14 (122 aa).

The protein belongs to the universal ribosomal protein uL14 family. In terms of assembly, part of the 50S ribosomal subunit. Forms a cluster with proteins L3 and L19. In the 70S ribosome, L14 and L19 interact and together make contacts with the 16S rRNA in bridges B5 and B8.

Binds to 23S rRNA. Forms part of two intersubunit bridges in the 70S ribosome. The sequence is that of Large ribosomal subunit protein uL14 from Syntrophus aciditrophicus (strain SB).